The chain runs to 531 residues: PHD finger protein 21B (531 aa).

4 disordered regions span residues 79–99, 184–222, 238–277, and 295–314; these read PDSL…PTFQ, SADN…SLSP, VQTQ…ENPE, and EIQS…PAYS. Positions 265 to 277 are enriched in basic and acidic residues; that stretch reads KKEDRPPTQENPE. The PHD-type zinc finger occupies 352 to 399; it reads DEHCAACKRGANLQPCGTCPGAYHLSCLEPPLKTAPKGVWVCPRCQQK. Positions 423-465 form a coiled coil; the sequence is KTVKEEEKQKLLQRGSELQNEHQQLEERDRRLASAVQKCLELK. Positions 507 to 531 are disordered; it reads LLAGPWTKPSVAATHPTVQHPQGHN. Polar residues predominate over residues 522 to 531; it reads PTVQHPQGHN.

This is PHD finger protein 21B (PHF21B) from Homo sapiens (Human).